Reading from the N-terminus, the 480-residue chain is Dimethyl-sulfide monooxygenase (480 aa).

Residues D58, T104, H154, Y158, and S230 each contribute to the FMN site. The tract at residues 423–480 is disordered; the sequence is QDSYKPGSLRRKLIGTNDGRVESTHPAAQYRDAYVGKESVADRTQPSPFANAKAPVAE.

It belongs to the NtaA/SnaA/DszA monooxygenase family. In terms of assembly, heterodimer of 2 subunits, DmoA and DmoB. FMN serves as cofactor.

It carries out the reaction dimethyl sulfide + NADH + O2 + H(+) = methanethiol + formaldehyde + NAD(+) + H2O. With respect to regulation, inhibited by umbelliferone, 8-anilinonaphthalenesulfonate, a range of metal-chelating agents, and Hg(2+), Cd(2+) and Pb(2+) ions. In terms of biological role, monooxygenase that mediates oxidation of dimethyl sulfide, the first step in dimethyl sulfide degradation pathway. Has much lower activity with diethyl sulfide and other short-chain alkyl methyl sulfides. In Hyphomicrobium sulfonivorans, this protein is Dimethyl-sulfide monooxygenase (dmoA).